A 274-amino-acid polypeptide reads, in one-letter code: Serine acetyltransferase (274 aa).

This sequence belongs to the transferase hexapeptide repeat family.

It is found in the cytoplasm. The catalysed reaction is L-serine + acetyl-CoA = O-acetyl-L-serine + CoA. The protein operates within amino-acid biosynthesis; L-cysteine biosynthesis; L-cysteine from L-serine: step 1/2. In Buchnera aphidicola subsp. Acyrthosiphon pisum (strain APS) (Acyrthosiphon pisum symbiotic bacterium), this protein is Serine acetyltransferase (cysE).